Reading from the N-terminus, the 106-residue chain is Somatoliberin (106 aa).

The signal sequence occupies residues 1-19 (MLLWVFFLVTLTLSSGSHG). A propeptide spanning residues 20–30 (SLPSQPLRIPR) is cleaved from the precursor. L74 bears the Leucine amide mark. A propeptide spanning residues 77-106 (QVDGVWTDQQQMALESTLVSLLQERRNSQG) is cleaved from the precursor.

It belongs to the glucagon family.

The protein resides in the secreted. In terms of biological role, GRF is released by the hypothalamus and acts on the adenohypophyse to stimulate the secretion of growth hormone. The sequence is that of Somatoliberin (GHRH) from Bos taurus (Bovine).